We begin with the raw amino-acid sequence, 493 residues long: Transcript termination protein A18 (493 aa).

The Helicase ATP-binding domain maps to 100–256 (MIELKRPLYI…NSIINIAKLS (157 aa)). 113–120 (LACGFGKT) serves as a coordination point for ATP. The short motif at 206–209 (DESH) is the DESH box element.

This sequence belongs to the helicase family. Poxviruses subfamily. Interacts with G2. Might be part of a transcription complex composed at least of G2, A18, and H5.

Its subcellular location is the virion. Its function is as follows. DNA helicase which seems to act as a postreplicative transcription termination factor. Involved in ATP-dependent release of nascent RNA. Forms a stable complex with single-stranded DNA, and to a lesser extent RNA. The polypeptide is Transcript termination protein A18 (Camelus).